Reading from the N-terminus, the 206-residue chain is Thymidylate kinase (206 aa).

11-18 (GIDGAGKT) is an ATP binding site.

The protein belongs to the thymidylate kinase family.

The enzyme catalyses dTMP + ATP = dTDP + ADP. Its function is as follows. Phosphorylation of dTMP to form dTDP in both de novo and salvage pathways of dTTP synthesis. This Burkholderia ambifaria (strain MC40-6) protein is Thymidylate kinase.